The primary structure comprises 133 residues: uncharacterized protein (133 aa).

It belongs to the mimivirus L87/L94 family.

This is an uncharacterized protein from Acanthamoeba polyphaga mimivirus (APMV).